A 174-amino-acid polypeptide reads, in one-letter code: Shikimate kinase 2 (174 aa).

ATP is bound at residue glycine 12–threonine 17. Mg(2+) contacts are provided by threonine 16 and aspartate 32. Aspartate 34, arginine 58, and glycine 79 together coordinate substrate. An LID domain region spans residues methionine 112 to lysine 126. Arginine 120 provides a ligand contact to ATP. Substrate is bound at residue arginine 139.

The protein belongs to the shikimate kinase family. AroL subfamily. In terms of assembly, monomer. The cofactor is Mg(2+).

The protein localises to the cytoplasm. The catalysed reaction is shikimate + ATP = 3-phosphoshikimate + ADP + H(+). It participates in metabolic intermediate biosynthesis; chorismate biosynthesis; chorismate from D-erythrose 4-phosphate and phosphoenolpyruvate: step 5/7. In terms of biological role, catalyzes the specific phosphorylation of the 3-hydroxyl group of shikimic acid using ATP as a cosubstrate. This Photorhabdus laumondii subsp. laumondii (strain DSM 15139 / CIP 105565 / TT01) (Photorhabdus luminescens subsp. laumondii) protein is Shikimate kinase 2.